The sequence spans 823 residues: ATM interactor (823 aa).

The interval 28–67 (GAAAAASGPWVPPGPRLRGSRPRPAGATQQPAVPAPPAGE) is disordered. Over residues 49 to 59 (PRPAGATQQPA) the composition is skewed to low complexity. Residues 84 to 109 (ILCTVRGCGKILPNSPALNMHLVKSH) form a C2H2-type 1 zinc finger. Residues 165–184 (HKCSKCSNSYGTEWDLKRHA) form a C2H2-type 2; degenerate zinc finger. Basic and acidic residues predominate over residues 214 to 225 (HEIPAEHRDPPS). 3 disordered regions span residues 214–234 (HEIPAEHRDPPSKKRKMENCA), 268–289 (EPSFEDSCGSNTDKQTLTTPPR), and 610–634 (RSLLSDTNPGPDTQLPSGPAQNPGI). A required for formation of RAD51 foci region spans residues 223–442 (PPSKKRKMEN…ADSSVSSCSQ (220 aa)). 2 stretches are compositionally biased toward polar residues: residues 275 to 286 (CGSNTDKQTLTT) and 613 to 629 (LSDTNPGPDTQLPSGPA).

Interacts via its C-terminus with ATM. Interacts with DYNLL1; this interaction inhibits ATMIN transcriptional activity and hence may play a role in a feedback loop whereby DYNLL1 inhibits transactivation of its own promoter by ATMIN. Ubiquitously expressed in normal tissues and cancer cell lines with highest levels in placenta and skeletal muscle.

The protein localises to the nucleus. Its function is as follows. Transcription factor. Plays a crucial role in cell survival and RAD51 foci formation in response to methylating DNA damage. Involved in regulating the activity of ATM in the absence of DNA damage. May play a role in stabilizing ATM. Binds to the DYNLL1 promoter and activates its transcription. This is ATM interactor (ATMIN) from Homo sapiens (Human).